Consider the following 296-residue polypeptide: 4-hydroxy-tetrahydrodipicolinate synthase (296 aa).

Residue threonine 49 coordinates pyruvate. Residue tyrosine 137 is the Proton donor/acceptor of the active site. Residue lysine 166 is the Schiff-base intermediate with substrate of the active site. Isoleucine 208 lines the pyruvate pocket.

This sequence belongs to the DapA family. In terms of assembly, homotetramer; dimer of dimers.

The protein resides in the cytoplasm. It carries out the reaction L-aspartate 4-semialdehyde + pyruvate = (2S,4S)-4-hydroxy-2,3,4,5-tetrahydrodipicolinate + H2O + H(+). Its pathway is amino-acid biosynthesis; L-lysine biosynthesis via DAP pathway; (S)-tetrahydrodipicolinate from L-aspartate: step 3/4. Catalyzes the condensation of (S)-aspartate-beta-semialdehyde [(S)-ASA] and pyruvate to 4-hydroxy-tetrahydrodipicolinate (HTPA). The protein is 4-hydroxy-tetrahydrodipicolinate synthase of Chlorobaculum parvum (strain DSM 263 / NCIMB 8327) (Chlorobium vibrioforme subsp. thiosulfatophilum).